Consider the following 109-residue polypeptide: Flagellar transcriptional regulator FlhD (109 aa).

The protein belongs to the FlhD family. As to quaternary structure, homodimer; disulfide-linked. Forms a heterohexamer composed of two FlhC and four FlhD subunits. Each FlhC binds a FlhD dimer, forming a heterotrimer, and a hexamer assembles by dimerization of two heterotrimers.

It is found in the cytoplasm. Functionally, functions in complex with FlhC as a master transcriptional regulator that regulates transcription of several flagellar and non-flagellar operons by binding to their promoter region. Activates expression of class 2 flagellar genes, including fliA, which is a flagellum-specific sigma factor that turns on the class 3 genes. Also regulates genes whose products function in a variety of physiological pathways. The polypeptide is Flagellar transcriptional regulator FlhD (Acidovorax sp. (strain JS42)).